The following is a 387-amino-acid chain: Acyl-[acyl-carrier-protein] 6-desaturase (387 aa).

A chloroplast-targeting transit peptide spans 1 to 29; the sequence is MALVFKSIGAHKTPPCTLNLASPALYHTR. The Fe cation site is built by glutamate 131, glutamate 169, histidine 172, glutamate 222, glutamate 255, and histidine 258.

It belongs to the fatty acid desaturase type 2 family. The cofactor is Fe(2+).

It is found in the plastid. It localises to the chloroplast. The enzyme catalyses hexadecanoyl-[ACP] + 2 reduced [2Fe-2S]-[ferredoxin] + O2 + 2 H(+) = (6Z)-hexadecenoyl-[ACP] + 2 oxidized [2Fe-2S]-[ferredoxin] + 2 H2O. It functions in the pathway lipid metabolism; fatty acid metabolism. Its activity is regulated as follows. Inhibited by KCN or H(2)O(2). Its function is as follows. Delta(6) fatty acid desaturase introducing a cis double bond at carbon 6 of palmitoyl-[acyl-carrier protein](16:0-ACP), producing 16:1(6Z)-ACP. No activity with the coenzyme A ester of the fatty acid. The position of the double bond is determined by its distance from the carboxyl end of the fatty acid. Low activity with several saturated acyl-[acyl-carrier protein]s, including 14:0-ACP and 18:0-ACP. Requires reduced ferredoxin for detectable in vitro activity. The polypeptide is Acyl-[acyl-carrier-protein] 6-desaturase (Thunbergia alata (Black-eyed Susan vine)).